Consider the following 179-residue polypeptide: Deoxyuridine 5'-triphosphate nucleotidohydrolase (179 aa).

Substrate contacts are provided by residues 90–92 (RSG), asparagine 103, 107–109 (TVD), and lysine 117.

This sequence belongs to the dUTPase family. Mg(2+) is required as a cofactor.

It catalyses the reaction dUTP + H2O = dUMP + diphosphate + H(+). Its pathway is pyrimidine metabolism; dUMP biosynthesis; dUMP from dCTP (dUTP route): step 2/2. This enzyme is involved in nucleotide metabolism: it produces dUMP, the immediate precursor of thymidine nucleotides and it decreases the intracellular concentration of dUTP so that uracil cannot be incorporated into DNA. In Thermobifida fusca (strain YX), this protein is Deoxyuridine 5'-triphosphate nucleotidohydrolase.